Here is a 176-residue protein sequence, read N- to C-terminus: uncharacterized protein (176 aa).

The interval Arg71–Tyr176 is disordered. Composition is skewed to low complexity over residues Asp77–Gly87 and Ser100–Arg109. Residues Lys140 to Gly152 show a composition bias toward basic residues.

This is an uncharacterized protein from Orgyia pseudotsugata multicapsid polyhedrosis virus (OpMNPV).